Consider the following 278-residue polypeptide: uncharacterized protein (278 aa).

NAD(+) contacts are provided by residues 112-113 (HI), 191-193 (VGR), and aspartate 217. Arginine 193 is an active-site residue. Glutamate 222 is a catalytic residue. Histidine 241 (proton donor) is an active-site residue. 241 to 244 (HSAG) is an NAD(+) binding site.

Belongs to the D-isomer specific 2-hydroxyacid dehydrogenase family.

This is an uncharacterized protein from Streptomyces coelicolor.